The chain runs to 208 residues: ATP synthase subunit beta, chloroplastic (208 aa).

This sequence belongs to the ATPase alpha/beta chains family. As to quaternary structure, F-type ATPases have 2 components, CF(1) - the catalytic core - and CF(0) - the membrane proton channel. CF(1) has five subunits: alpha(3), beta(3), gamma(1), delta(1), epsilon(1). CF(0) has four main subunits: a(1), b(1), b'(1) and c(9-12).

It localises to the plastid. It is found in the chloroplast thylakoid membrane. It catalyses the reaction ATP + H2O + 4 H(+)(in) = ADP + phosphate + 5 H(+)(out). Produces ATP from ADP in the presence of a proton gradient across the membrane. The catalytic sites are hosted primarily by the beta subunits. This Lonchitis hirsuta (Tomato fern) protein is ATP synthase subunit beta, chloroplastic (atpB).